A 337-amino-acid chain; its full sequence is B1 bradykinin receptor (337 aa).

Residues 1 to 41 lie on the Extracellular side of the membrane; the sequence is MASEVLLELQPSNRSLQAPANITSCESALEDWDLLYRVLPG. Asn13 and Asn21 each carry an N-linked (GlcNAc...) asparagine glycan. The helical transmembrane segment at 42–62 threads the bilayer; sequence FVITICFFGLLGNLLVLSFFL. The Cytoplasmic portion of the chain corresponds to 63–83; the sequence is LPWRQWWWQQRQRQQRLTIAE. A helical membrane pass occupies residues 84 to 104; sequence IYLANLAASDLVFVLGLPFWA. Over 105–121 the chain is Extracellular; the sequence is ENIGNRFNWPFGTDLCR. A disulfide bridge connects residues Cys120 and Cys199. Residues 122–142 traverse the membrane as a helical segment; that stretch reads VVSGVIKANLFVSIFLVVAIS. Over 143–164 the chain is Cytoplasmic; sequence QDRYRLLVYPMTSWGYRRRRQA. Residues 165 to 185 form a helical membrane-spanning segment; it reads QATCLLIWVAGGLLSIPTFLL. The Extracellular segment spans residues 186–217; that stretch reads RSVKVVPDLNVSACILLFPHEAWHFARMVELN. A glycan (N-linked (GlcNAc...) asparagine) is linked at Asn195. Residues 218–238 traverse the membrane as a helical segment; that stretch reads VLGFLLPVTAIIFFNYHILAS. Topologically, residues 239–261 are cytoplasmic; it reads LRGQKEASRTRCGGPKGSKTTGL. Residues 262-282 form a helical membrane-spanning segment; the sequence is ILTLVASFLVCWCPYHFFAFL. The Extracellular segment spans residues 283-305; it reads DFLVQVRVIQDCSWKEITDLGLQ. The helical transmembrane segment at 306–326 threads the bilayer; the sequence is LANFFAFVNSCLNPLIYVFAG. The Cytoplasmic segment spans residues 327 to 337; that stretch reads RLLKTRVLGTL.

Belongs to the G-protein coupled receptor 1 family. Bradykinin receptor subfamily. BDKRB1 sub-subfamily. In terms of tissue distribution, expressed in bladder, lung, duodenum, kidney, uterus, thymus, salivary gland, testis, prostate, macrophages, aorta, spleen and heart.

It is found in the cell membrane. In terms of biological role, this is a receptor for bradykinin. Could be a factor in chronic pain and inflammation. This is B1 bradykinin receptor (Bdkrb1) from Rattus norvegicus (Rat).